A 308-amino-acid chain; its full sequence is Homeobox protein HMX3 (308 aa).

Disordered stretches follow at residues 1–57 and 107–184; these read MPET…GFAL and AEKS…KKKT. Positions 9–19 are enriched in pro residues; that stretch reads PSAPPPPPPPK. Composition is skewed to basic and acidic residues over residues 135-144 and 156-177; these read AEQKERDPKS and EEGK…PEKK. A DNA-binding region (homeobox) is located at residues 181 to 240; that stretch reads KKKTRTVFSRSQVFQLESTFDMKRYLSSSERAGLAASLHLTETQVKIWFQNRRNKWKRQL.

This sequence belongs to the HMX homeobox family.

The protein localises to the nucleus. Its function is as follows. Transcription factor involved in specification of neuronal cell types and which is required for inner ear and hypothalamus development. Binds to the 5'-CAAGTG-3' core sequence. The sequence is that of Homeobox protein HMX3 (HMX3) from Gallus gallus (Chicken).